A 252-amino-acid chain; its full sequence is Fatty acid elongase 4 (252 aa).

Residues 25 to 45 form a helical membrane-spanning segment; that stretch reads LVSWHALVLGHLLYLFVVFVM. A glycan (N-linked (GlcNAc...) asparagine) is linked at asparagine 56. Residues 60 to 80 form a helical membrane-spanning segment; the sequence is VLVVYNVLQICLSAAMAINLS. N-linked (GlcNAc...) asparagine glycosylation occurs at asparagine 89. The next 5 helical transmembrane spans lie at 100–120, 127–147, 150–170, 187–207, and 214–234; these read FWMFVHYCSKYIDMLDTVFIL, QLSFLHVYHHCTIGLIWGILL, GLANGTAFFGTWINSSVHFLM, FLLTKIQMLQFSLCILHAILV, and FTLGWNLLQLLYNASLLVLFL. The HxxHH motif motif lies at 132–136; that stretch reads HVYHH. Histidine 135 acts as the Nucleophile in catalysis.

This sequence belongs to the ELO family.

The protein resides in the membrane. It catalyses the reaction (5Z,8Z,11Z,14Z)-eicosatetraenoyl-CoA + malonyl-CoA + H(+) = (7Z,10Z,13Z,16Z)-3-oxodocosatetraenoyl-CoA + CO2 + CoA. Its pathway is lipid metabolism; fatty acid biosynthesis. Its function is as follows. Involved in the synthesis of fatty acids. Elongates arachidonate and other C20 polyunsaturated fatty acids (PUFAs) with a preference for n-6 PUFAs. Not involved in fatty acid synthesis up to C18. The chain is Fatty acid elongase 4 from Trypanosoma brucei brucei (strain 927/4 GUTat10.1).